The chain runs to 605 residues: Elongation factor 4 (605 aa).

The 184-residue stretch at 9-192 (SRIRNFCIIA…AIIARVPAPA (184 aa)) folds into the tr-type G domain. GTP-binding positions include 21 to 26 (DHGKST) and 139 to 142 (NKID).

This sequence belongs to the TRAFAC class translation factor GTPase superfamily. Classic translation factor GTPase family. LepA subfamily.

Its subcellular location is the cell inner membrane. The catalysed reaction is GTP + H2O = GDP + phosphate + H(+). Functionally, required for accurate and efficient protein synthesis under certain stress conditions. May act as a fidelity factor of the translation reaction, by catalyzing a one-codon backward translocation of tRNAs on improperly translocated ribosomes. Back-translocation proceeds from a post-translocation (POST) complex to a pre-translocation (PRE) complex, thus giving elongation factor G a second chance to translocate the tRNAs correctly. Binds to ribosomes in a GTP-dependent manner. The sequence is that of Elongation factor 4 from Chlorobium luteolum (strain DSM 273 / BCRC 81028 / 2530) (Pelodictyon luteolum).